We begin with the raw amino-acid sequence, 372 residues long: Alanine dehydrogenase 1 (372 aa).

His-94 is a catalytic residue. NAD(+) is bound at residue 170-200 (TYVIFGGGVAATNAANVALGLNAKVIIIELN).

Belongs to the AlaDH/PNT family.

The catalysed reaction is L-alanine + NAD(+) + H2O = pyruvate + NH4(+) + NADH + H(+). It functions in the pathway amino-acid degradation; L-alanine degradation via dehydrogenase pathway; NH(3) and pyruvate from L-alanine: step 1/1. Functionally, may play a role in cell wall synthesis as L-alanine is an important constituent of the peptidoglycan layer. The protein is Alanine dehydrogenase 1 (ald1) of Staphylococcus aureus (strain MSSA476).